Reading from the N-terminus, the 286-residue chain is Nucleotide-binding protein Tgr7_0722 (286 aa).

Position 8–15 (8–15) interacts with ATP; the sequence is GLSGSGKS. 60–63 lines the GTP pocket; the sequence is DVRS.

Belongs to the RapZ-like family.

Displays ATPase and GTPase activities. The protein is Nucleotide-binding protein Tgr7_0722 of Thioalkalivibrio sulfidiphilus (strain HL-EbGR7).